Consider the following 461-residue polypeptide: MSHITTEDPATLRLPFKEKLSYGIGDLASNILLDIGTLYLLKFYTDVLGLPGTYGGIIFLISKFFTAFTDMGTGIMLDSRRKIGPKGKFRPFILYASFPVTLLAIANFVGTPFDVTGKTVMATILFMLYGLFFSMMNCSYGAMVPAITKNPNERASLAAWRQGGATLGLLLCTVGFVPVMNLIEGNQQLGYIFAATLFSLFGLLFMWICYSGVKERYVETQPANPAQKPGLLQSFRAIAGNRPLFILCIANLCTLGAFNVKLAIQVYYTQYVLNDPILLSYMGFFSMGCIFIGVFLMPASVRRFGKKKVYIGGLLIWVLGDLLNYFFGGGSVSFVAFSCLAFFGSAFVNSLNWALVSDTVEYGEWRTGVRSEGTVYTGFTFFRKVSQALAGFFPGWMLTQIGYVPNVAQADHTIEGLRQLIFIYPSALAVVTIVAMGCFYSLNEKMYVRIVEEIEARKRTA.

Residues 1-20 (MSHITTEDPATLRLPFKEKL) are Cytoplasmic-facing. Residues 21–41 (SYGIGDLASNILLDIGTLYLL) traverse the membrane as a helical segment. Residues 42-47 (KFYTDV) lie on the Periplasmic side of the membrane. Residues 48–68 (LGLPGTYGGIIFLISKFFTAF) traverse the membrane as a helical segment. The Cytoplasmic portion of the chain corresponds to 69–92 (TDMGTGIMLDSRRKIGPKGKFRPF). Residues 93–113 (ILYASFPVTLLAIANFVGTPF) traverse the membrane as a helical segment. Topologically, residues 114 to 123 (DVTGKTVMAT) are periplasmic. Residues 124 to 144 (ILFMLYGLFFSMMNCSYGAMV) form a helical membrane-spanning segment. The Cytoplasmic portion of the chain corresponds to 145 to 162 (PAITKNPNERASLAAWRQ). Residues 163–183 (GGATLGLLLCTVGFVPVMNLI) form a helical membrane-spanning segment. The Periplasmic portion of the chain corresponds to 184–188 (EGNQQ). The helical transmembrane segment at 189–209 (LGYIFAATLFSLFGLLFMWIC) threads the bilayer. Topologically, residues 210-243 (YSGVKERYVETQPANPAQKPGLLQSFRAIAGNRP) are cytoplasmic. The helical transmembrane segment at 244-264 (LFILCIANLCTLGAFNVKLAI) threads the bilayer. The Periplasmic portion of the chain corresponds to 265–276 (QVYYTQYVLNDP). A helical transmembrane segment spans residues 277–297 (ILLSYMGFFSMGCIFIGVFLM). The Cytoplasmic segment spans residues 298-308 (PASVRRFGKKK). Residues 309–329 (VYIGGLLIWVLGDLLNYFFGG) traverse the membrane as a helical segment. A topological domain (periplasmic) is located at residue glycine 330. Residues 331-351 (SVSFVAFSCLAFFGSAFVNSL) form a helical membrane-spanning segment. Residues 352-387 (NWALVSDTVEYGEWRTGVRSEGTVYTGFTFFRKVSQ) lie on the Cytoplasmic side of the membrane. Residues 388 to 408 (ALAGFFPGWMLTQIGYVPNVA) traverse the membrane as a helical segment. Residues 409 to 419 (QADHTIEGLRQ) are Periplasmic-facing. A helical transmembrane segment spans residues 420-440 (LIFIYPSALAVVTIVAMGCFY). Residues 441–461 (SLNEKMYVRIVEEIEARKRTA) are Cytoplasmic-facing.

Belongs to the sodium:galactoside symporter (TC 2.A.2) family.

The protein resides in the cell inner membrane. Its function is as follows. Could be involved in the export of 2,3-dihydroxypropane-1-sulfonate (DHPS). The polypeptide is Putative 2,3-dihydroxypropane-1-sulfonate exporter (yihP) (Escherichia coli (strain K12)).